The following is an 836-amino-acid chain: ATP-binding cassette sub-family B member 6 (836 aa).

The Lumenal segment spans residues 1-26 (MVTVGNYCEAEGPAGPAWTQNGLSPC). The tract at residues 1 to 205 (MVTVGNYCEA…SGGLFILGLW (205 aa)) is required for the lysosomal targeting. Residues 1-236 (MVTVGNYCEA…RNQGRSTDPR (236 aa)) are required for ATPase activity. An intrachain disulfide couples cysteine 8 to cysteine 26. The helical transmembrane segment at 27–47 (FFYTLVPSTLMTLGVLALVLV) threads the bilayer. Over 48-72 (LPCRRREVPAGTEELSWAAGPRVAP) the chain is Cytoplasmic. Residues 73–93 (YALQLSLAILQMALPLASLAG) traverse the membrane as a helical segment. Residues 94–106 (RVGTARGVRLPGY) are Lumenal-facing. The chain crosses the membrane as a helical span at residues 107 to 127 (LLLASVLESLASACGLWLLVV). Over 128–147 (ERSQARQSLAMGVWMKFRHS) the chain is Cytoplasmic. Residues 148 to 168 (LGLLLLWTVTFAAENLVLVSW) form a helical membrane-spanning segment. Residues 169 to 185 (NSPQWWWSRADLGQQVQ) are Lumenal-facing. A helical transmembrane segment spans residues 186-206 (FGLWVLRYMTSGGLFILGLWA). Topologically, residues 207-264 (PGLRPQSYTLHVNEEDQDGGRNQGRSTDPRSTWRDLGRKLRLLSGYLWPRGSPSLQLT) are cytoplasmic. The helical transmembrane segment at 265-285 (VLLCMGLMGLDRALNVLVPIF) threads the bilayer. Residues 265 to 556 (VLLCMGLMGL…FGTYYRMIQT (292 aa)) enclose the ABC transmembrane type-1 domain. Topologically, residues 286-305 (YRDIVNLLTSKAPWSSLAWT) are lumenal. A helical transmembrane segment spans residues 306 to 326 (VTTYVFLKFLQGGGTGSTGFV). Residues 327–375 (SNLRTFLWIRVQQFTSRGVELRLFSHLHELSLRWHLGRRTGEVLRIVDR) lie on the Cytoplasmic side of the membrane. Residues 376-396 (GTSSVTGLLSYLVFNIIPTLA) traverse the membrane as a helical segment. Aspartate 397 is a topological domain (lumenal). Residues 398–418 (IIIGIIYFSMFFNAWFGLIVF) form a helical membrane-spanning segment. The Cytoplasmic segment spans residues 419 to 499 (LCMSLYLILT…STASLVLLNQ (81 aa)). The chain crosses the membrane as a helical span at residues 500–520 (TQNMVIGFGLLAGSLLCAYFV). Topologically, residues 521 to 529 (SERRLQVGD) are lumenal. The chain crosses the membrane as a helical span at residues 530–550 (FVLFGTYITQLYMPLNWFGTY). Residues 551 to 836 (YRMIQTNFID…QGQETVPEDS (286 aa)) lie on the Cytoplasmic side of the membrane. The 235-residue stretch at 590–824 (VEFENVHFSY…GGVYAEMWQL (235 aa)) folds into the ABC transporter domain. ATP contacts are provided by residues tyrosine 599 and 623-634 (GPSGAGKSTILR).

The protein belongs to the ABC transporter superfamily. ABCB family. Heavy Metal importer (TC 3.A.1.210) subfamily. Homodimer. In terms of processing, N-glycosylated. Ubiquitously expressed. Highly expressed in testis by meiotic pachytene spermatocytes and post-meiotic early spermatids.

The protein resides in the cell membrane. The protein localises to the mitochondrion outer membrane. Its subcellular location is the endoplasmic reticulum membrane. It localises to the golgi apparatus membrane. It is found in the endosome membrane. The protein resides in the lysosome membrane. The protein localises to the late endosome membrane. Its subcellular location is the early endosome membrane. It localises to the secreted. It is found in the extracellular exosome. The protein resides in the mitochondrion. The protein localises to the endosome. Its subcellular location is the multivesicular body membrane. It localises to the melanosome membrane. It carries out the reaction heme b(in) + ATP + H2O = heme b(out) + ADP + phosphate + H(+). The enzyme catalyses coproporphyrin III(in) + ATP + H2O = coproporphyrin III(out) + ADP + phosphate + H(+). The catalysed reaction is pheophorbide a(in) + ATP + H2O = pheophorbide a(out) + ADP + phosphate + H(+). It catalyses the reaction coproporphyrinogen III(in) + ATP + H2O = coproporphyrinogen III(out) + ADP + phosphate + H(+). It carries out the reaction protoporphyrin IX(in) + ATP + H2O = protoporphyrin IX(out) + ADP + phosphate + H(+). The enzyme catalyses coproporphyrin I(in) + ATP + H2O = coproporphyrin I(out) + ADP + phosphate + H(+). The catalysed reaction is uroporphyrin I(in) + ATP + H2O = uroporphyrin I(out) + ADP + phosphate + H(+). It catalyses the reaction uroporphyrin III(in) + ATP + H2O = uroporphyrin III(out) + ADP + phosphate + H(+). Its function is as follows. ATP-dependent transporter that catalyzes the transport of a broad-spectrum of porphyrins from the cytoplasm to the extracellular space through the plasma membrane or into the vesicle lumen. May also function as an ATP-dependent importer of porphyrins from the cytoplasm into the mitochondria, in turn may participate in the de novo heme biosynthesis regulation and in the coordination of heme and iron homeostasis during phenylhydrazine stress. May play a key role in the early steps of melanogenesis producing PMEL amyloid fibrils. In vitro, it confers to cells a resistance to toxic metal such as arsenic and cadmium and against chemotherapeutics agent such as 5-fluorouracil, SN-38 and vincristin. In addition may play a role in the transition metal homeostasis. The sequence is that of ATP-binding cassette sub-family B member 6 from Rattus norvegicus (Rat).